A 360-amino-acid chain; its full sequence is Peptide chain release factor 1 (360 aa).

Position 237 is an N5-methylglutamine (glutamine 237).

This sequence belongs to the prokaryotic/mitochondrial release factor family. Post-translationally, methylated by PrmC. Methylation increases the termination efficiency of RF1.

The protein localises to the cytoplasm. In terms of biological role, peptide chain release factor 1 directs the termination of translation in response to the peptide chain termination codons UAG and UAA. The protein is Peptide chain release factor 1 of Pseudomonas putida (strain ATCC 47054 / DSM 6125 / CFBP 8728 / NCIMB 11950 / KT2440).